A 579-amino-acid chain; its full sequence is Carotenoid-cleaving dioxygenase, mitochondrial (579 aa).

Residues histidine 226, histidine 286, histidine 357, and histidine 573 each coordinate Fe cation.

Belongs to the carotenoid oxygenase family. Fe(2+) serves as cofactor. As to expression, highly expressed in retinal pigment epithelium. Also expressed in stomach, small intestine, liver, testis, kidney, adrenal gland, pancreas, heart, skeletal muscle and prostate (at protein level).

Its subcellular location is the mitochondrion. It carries out the reaction all-trans-beta-carotene + O2 = beta-ionone + all-trans-10'-apo-beta-carotenal. It catalyses the reaction 5-cis-lycopene + O2 = 5-cis-10'-apo-lycopenal + (3E,5E)-6,10-dimethylundeca-3,5,9-trien-2-one. The catalysed reaction is 13-cis-lycopene + O2 = 13-cis-10'-apo-lycopenal + (3E,5E)-6,10-dimethylundeca-3,5,9-trien-2-one. The enzyme catalyses lutein + O2 = (3R,6R)-hydroxy-alpha-ionone + (3R)-3-hydroxy-10'-apo-beta-carotenal. It carries out the reaction lutein + O2 = (3R,6R)-3-hydroxy-10'-apo-alpha-carotenal + (3R)-hydroxy-beta-ionone. It catalyses the reaction all-trans-zeaxanthin + 2 O2 = 4,9-dimethyldodeca-2,4,6,8,10-pentaenedial + 2 (3R)-hydroxy-beta-ionone. The catalysed reaction is all-trans-zeaxanthin + O2 = (3R)-3-hydroxy-10'-apo-beta-carotenal + (3R)-hydroxy-beta-ionone. The enzyme catalyses beta-cryptoxanthin + O2 = all-trans-10'-apo-beta-carotenal + (3R)-hydroxy-beta-ionone. It carries out the reaction all-trans-10'-apo-beta-carotenal + O2 = beta-ionone + 4,9-dimethyldodeca-2,4,6,8,10-pentaenedial. It catalyses the reaction (3R)-3-hydroxy-10'-apo-beta-carotenal + O2 = 4,9-dimethyldodeca-2,4,6,8,10-pentaenedial + (3R)-hydroxy-beta-ionone. The catalysed reaction is (3R,6R)-3-hydroxy-10'-apo-alpha-carotenal + O2 = (3R,6R)-hydroxy-alpha-ionone + 4,9-dimethyldodeca-2,4,6,8,10-pentaenedial. Broad specificity mitochondrial dioxygenase that mediates the asymmetric oxidative cleavage of carotenoids. Cleaves carotenes (pure hydrocarbon carotenoids) such as all-trans-beta-carotene and lycopene as well as xanthophylls (oxygenated carotenoids) such as zeaxanthin, lutein and beta-cryptoxanthin at both the 9,10 and the 9',10' carbon-carbon double bond. Through its function in carotenoids metabolism regulates oxidative stress and the production of important signaling molecules. The sequence is that of Carotenoid-cleaving dioxygenase, mitochondrial from Homo sapiens (Human).